The sequence spans 183 residues: Putative 3-methyladenine DNA glycosylase (183 aa).

The protein belongs to the DNA glycosylase MPG family.

This Rickettsia rickettsii (strain Iowa) protein is Putative 3-methyladenine DNA glycosylase.